The sequence spans 201 residues: NADH-ubiquinone oxidoreductase 21.3 kDa subunit (201 aa).

Complex I is composed of about 40 different subunits.

It is found in the mitochondrion inner membrane. The catalysed reaction is a ubiquinone + NADH + 5 H(+)(in) = a ubiquinol + NAD(+) + 4 H(+)(out). Its function is as follows. Transfer of electrons from NADH to the respiratory chain. The immediate electron acceptor for the enzyme is believed to be ubiquinone. This is NADH-ubiquinone oxidoreductase 21.3 kDa subunit from Neurospora crassa (strain ATCC 24698 / 74-OR23-1A / CBS 708.71 / DSM 1257 / FGSC 987).